Consider the following 639-residue polypeptide: MATGANATPLDFPSKKRKRSRWNQDTMEQKTVIPGMPTVIPPGLTREQERAYIVQLQIEDLTRKLRTGDLGIPPNPEDRSPSPEPIYNSEGKRLNTREFRTRKKLEEERHNLITEMVALNPDFKPPADYKPPATRVSDKVMIPQDEYPEINFVGLLIGPRGNTLKNIEKECNAKIMIRGKGSVKEGKVGRKDGQMLPGEDEPLHALVTANTMENVKKAVEQIRNILKQGIETPEDQNDLRKMQLRELARLNGTLREDDNRILRPWQSSETRSITNTTVCTKCGGAGHIASDCKFQRPGDPQSAQDKARMDKEYLSLMAELGEAPVPASVGSTSGPATTPLASAPRPAAPANNPPPPSLMSTTQSRPPWMNSGPSESRPYHGMHGGGPGGPGGGPHSFPHPLPSLTGGHGGHPMQHNPNGPPPPWMQPPPPPMNQGPHPPGHHGPPPMDQYLGSTPVGSGVYRLHQGKGMMPPPPMGMMPPPPPPPSGQPPPPPSGPLPPWQQQQQQPPPPPPPSSSMASSTPLPWQQNTTTTTTSAGTGSIPPWQQQQAAAAASPGAPQMQGNPTMVPLPPGVQPPLPPGAPPPPPPPPPGSAGMMYAPPPPPPPPMDPSNFVTMMGMGVAGMPPFGMPPAPPPPPPQN.

Disordered regions lie at residues 1–42 and 65–94; these read MATG…VIPP and LRTG…GKRL. N-acetylalanine is present on alanine 2. Phosphoserine is present on serine 14. The Nuclear localization signal signature appears at 15–19; it reads KKRKR. A Phosphoserine; by PKG modification is found at serine 20. Phosphoserine is present on residues serine 80 and serine 82. Tyrosine 87 is subject to Phosphotyrosine. At serine 89 the chain carries Phosphoserine. In terms of domain architecture, KH spans 141–222; it reads MIPQDEYPEI…ENVKKAVEQI (82 aa). The segment at 277-296 adopts a CCHC-type zinc-finger fold; it reads TVCTKCGGAGHIASDCKFQR. A disordered region spans residues 325 to 639; that stretch reads VPASVGSTSG…PAPPPPPPQN (315 aa). A compositionally biased stretch (low complexity) spans 335–350; it reads PATTPLASAPRPAAPA. A compositionally biased stretch (gly residues) spans 382–394; the sequence is MHGGGPGGPGGGP. Residues 418–447 show a composition bias toward pro residues; it reads NGPPPPWMQPPPPPMNQGPHPPGHHGPPPM. Leucine 463 is modified (phosphoserine). Lysine 467 carries the omega-N-methylarginine modification. The span at 470-499 shows a compositional bias: pro residues; it reads MPPPPMGMMPPPPPPPSGQPPPPPSGPLPP. Low complexity-rich tracts occupy residues 515–534 and 542–566; these read SSMA…TTTT and PPWQ…NPTM. 2 stretches are compositionally biased toward pro residues: residues 567–591 and 598–608; these read VPLP…PPPG and APPPPPPPPMD. The span at 615 to 625 shows a compositional bias: low complexity; that stretch reads MMGMGVAGMPP. Pro residues predominate over residues 626–639; the sequence is FGMPPAPPPPPPQN.

It belongs to the BBP/SF1 family. As to quaternary structure, binds U2AF2. Interacts with U1 snRNA. Binds EWSR1, FUS and TAF15. Interacts with RBM17. Phosphorylation on Ser-20 interferes with U2AF2 binding and spliceosome assembly. Isoform 6 is phosphorylated on Ser-463. As to expression, detected in lung, ovary, adrenal gland, colon, kidney, muscle, pancreas, thyroid, placenta, brain, liver and heart.

The protein localises to the nucleus. Its function is as follows. Necessary for the ATP-dependent first step of spliceosome assembly. Binds to the intron branch point sequence (BPS) 5'-UACUAAC-3' of the pre-mRNA. May act as transcription repressor. This Homo sapiens (Human) protein is Splicing factor 1 (SF1).